Consider the following 209-residue polypeptide: Molybdenum cofactor guanylyltransferase (209 aa).

GTP is bound by residues 13-15 (LAG), Lys26, Asn54, Asp74, and Asp104. Asp104 serves as a coordination point for Mg(2+).

It belongs to the MobA family. In terms of assembly, monomer. It depends on Mg(2+) as a cofactor.

The protein resides in the cytoplasm. The enzyme catalyses Mo-molybdopterin + GTP + H(+) = Mo-molybdopterin guanine dinucleotide + diphosphate. Transfers a GMP moiety from GTP to Mo-molybdopterin (Mo-MPT) cofactor (Moco or molybdenum cofactor) to form Mo-molybdopterin guanine dinucleotide (Mo-MGD) cofactor. The polypeptide is Molybdenum cofactor guanylyltransferase (Acinetobacter baumannii (strain ACICU)).